Consider the following 232-residue polypeptide: Pseudaminic acid cytidylyltransferase (232 aa).

Belongs to the CMP-NeuNAc synthase family. Requires Mg(2+) as cofactor.

It carries out the reaction pseudaminate + CTP = CMP-pseudaminate + diphosphate. In terms of biological role, catalyzes the final step in the biosynthesis of pseudaminic acid, a sialic-acid-like sugar that is used to modify flagellin. Mediates the activation of pseudaminic acid with CMP by forming CMP-pseudaminic acid. In Campylobacter jejuni subsp. jejuni serotype O:2 (strain ATCC 700819 / NCTC 11168), this protein is Pseudaminic acid cytidylyltransferase (pseF).